Reading from the N-terminus, the 161-residue chain is Glycine cleavage system H protein 3 (161 aa).

The 83-residue stretch at 40–122 folds into the Lipoyl-binding domain; it reads TVTLGLTDVG…YGDAWIVKIK (83 aa). Lysine 81 bears the N6-lipoyllysine mark.

It belongs to the GcvH family. The glycine cleavage system is composed of four proteins: P, T, L and H. It depends on (R)-lipoate as a cofactor.

The glycine cleavage system catalyzes the degradation of glycine. The H protein shuttles the methylamine group of glycine from the P protein to the T protein. The protein is Glycine cleavage system H protein 3 of Aquifex aeolicus (strain VF5).